Consider the following 882-residue polypeptide: Alanine--tRNA ligase (882 aa).

Positions 568, 572, 670, and 674 each coordinate Zn(2+).

It belongs to the class-II aminoacyl-tRNA synthetase family. Zn(2+) is required as a cofactor.

The protein resides in the cytoplasm. It carries out the reaction tRNA(Ala) + L-alanine + ATP = L-alanyl-tRNA(Ala) + AMP + diphosphate. Catalyzes the attachment of alanine to tRNA(Ala) in a two-step reaction: alanine is first activated by ATP to form Ala-AMP and then transferred to the acceptor end of tRNA(Ala). Also edits incorrectly charged Ser-tRNA(Ala) and Gly-tRNA(Ala) via its editing domain. This chain is Alanine--tRNA ligase, found in Syntrophotalea carbinolica (strain DSM 2380 / NBRC 103641 / GraBd1) (Pelobacter carbinolicus).